The following is a 193-amino-acid chain: MEHKLVVVTGVPGVGGTTITQKAMEILKEENINYKMVNFGTAMFEVAQSQNIVEDRDEMRKLDADTQKRIQKMAGRKIAEMVKEQPIVVDTHSTVKTPKGYLAGLPKWVLDELNPNMIVVVETTGDEILMRRMSDETRKRDLETASDIEEHQFMNRCAAMTYGVLTGATVKIVKNKNGLLDEGVEELVSILRY.

Residue 10 to 18 (GVPGVGGTT) coordinates ATP.

It belongs to the archaeal adenylate kinase family. As to quaternary structure, monomer.

Its subcellular location is the cytoplasm. It carries out the reaction AMP + ATP = 2 ADP. The polypeptide is Adenylate kinase (Methanococcus aeolicus (strain ATCC BAA-1280 / DSM 17508 / OCM 812 / Nankai-3)).